Reading from the N-terminus, the 324-residue chain is Beta-ketoacyl-[acyl-carrier-protein] synthase III (324 aa).

Catalysis depends on residues cysteine 113 and histidine 251. Positions 252 to 256 (QANKR) are ACP-binding. Asparagine 281 is an active-site residue.

Belongs to the thiolase-like superfamily. FabH family. Homodimer.

The protein resides in the cytoplasm. It catalyses the reaction malonyl-[ACP] + acetyl-CoA + H(+) = 3-oxobutanoyl-[ACP] + CO2 + CoA. Its pathway is lipid metabolism; fatty acid biosynthesis. Functionally, catalyzes the condensation reaction of fatty acid synthesis by the addition to an acyl acceptor of two carbons from malonyl-ACP. Catalyzes the first condensation reaction which initiates fatty acid synthesis and may therefore play a role in governing the total rate of fatty acid production. Possesses both acetoacetyl-ACP synthase and acetyl transacylase activities. Its substrate specificity determines the biosynthesis of branched-chain and/or straight-chain of fatty acids. This chain is Beta-ketoacyl-[acyl-carrier-protein] synthase III, found in Bartonella tribocorum (strain CIP 105476 / IBS 506).